A 2499-amino-acid chain; its full sequence is Polyprotein P1234 (2499 aa).

Positions 30 to 260 (VAQQVTPNDH…ENRADLQSWH (231 aa)) constitute an Alphavirus-like MT domain. The tract at residues 245-264 (GSTLYPENRADLQSWHLPSV) is nsP1 membrane-binding. A lipid anchor (S-palmitoyl cysteine; by host) is attached at Cys-420. Positions 694–849 (ELTNPPYHEL…RDLCTSTHYK (156 aa)) constitute a (+)RNA virus helicase ATP-binding domain. 725–732 (GTPGSGKS) contributes to the a ribonucleoside 5'-triphosphate binding site. Positions 850-998 (YISRRCTQPV…LEEWQAEHED (149 aa)) constitute a (+)RNA virus helicase C-terminal domain. One can recognise a Peptidase C9 domain in the interval 1011-1339 (DPFASKVNTC…LAVSNIFDNY (329 aa)). Positions 1012–1031 (PFASKVNTCWAKAIIPILRT) are nucleolus localization signal. Cys-1020 (for cysteine protease nsP2 activity) is an active-site residue. Positions 1065 to 1074 (TKMFGMDLSS) match the Nuclear export signal motif. His-1097 (for cysteine protease nsP2 activity) is an active-site residue. The short motif at 1194–1198 (VSKRI) is the Nuclear localization signal element. The Macro domain maps to 1346 to 1505 (APSYRVKRMN…RIADAIRMRE (160 aa)). 5 residues coordinate ADP-D-ribose: Asn-1369, Gly-1377, Gly-1457, Ile-1458, and Tyr-1459. 4 residues coordinate Zn(2+): Cys-1608, Cys-1610, Cys-1633, and Cys-1651. 2 consecutive short sequence motifs (FGDF; binding to host G3BP1) follow at residues 1845 to 1848 (FGDF) and 1865 to 1868 (FGDF). One can recognise a RdRp catalytic domain in the interval 2253-2368 (HPVLETDIGS…HGVVSDKIMA (116 aa)).

As to quaternary structure, interacts with non-structural protein 3. Interacts with RNA-directed RNA polymerase nsP4. Interacts with protease nsP2. interacts with itself. Interacts with mRNA-capping enzyme nsP1. Interacts with host DDX1. Interacts with host DDX3. Interacts (via C-terminus) with host G3BP1; this interaction inhibits the formation of host stress granules on viral mRNAs and the nsp3-G3BP1 complexes bind viral RNAs and probably orchestrate the assembly of viral replication complexes. Interacts (via C-terminus) with host G3BP2; this interaction inhibits the formation of host stress granules on viral mRNAs and the nsp3-G3BP2 complexes bind viral RNAs and probably orchestrate the assembly of viral replication complexes. In terms of assembly, interacts with mRNA-capping enzyme nsP1. Interacts with protease nsP2. interacts with itself. As to quaternary structure, interacts with RNA-directed RNA polymerase nsP4. Interacts with mRNA-capping enzyme nsP1. Interacts with KPNA1/karyopherin-alpha1; this interaction probably allows the active transport of protease nsP2 into the host nucleus. Mg(2+) serves as cofactor. Mn(2+) is required as a cofactor. Specific enzymatic cleavages in vivo yield mature proteins. The processing of the polyprotein is temporally regulated. In early stages (1.7 hpi), P1234 is first cleaved in trans through its nsP2 protease activity, releasing P123' and nsP4, which associate to form the early replication complex. At the same time, P1234 is also cut at the nsP1/nsP2 site early in infection but with lower efficiency. After replication of the viral minus-strand RNAs (4 hpi), the polyproteins are cut at the nsP1/nsP2 and nsP2/nsP3 sites very efficiently, preventing accumulation of P123' and P1234 and allowing the formation of the late replication complex. NsP3'/nsP4 site is not cleaved anymore and P34 is produced rather than nsP4. In terms of processing, specific enzymatic cleavages in vivo yield mature proteins. The processing of the polyprotein is temporally regulated. In early stages (1.7 hpi), P123 is cleaved at the nsP1/nsP2 site with low efficiency. After replication of the viral minus-strand RNAs (4 hpi), the polyproteins are cut at the nsP1/nsP2 and nsP2/nsP3 sites very efficiently, preventing accumulation of P123 and allowing the formation of the late replication complex. Post-translationally, specific enzymatic cleavages in vivo yield mature proteins. The processing of the polyprotein is temporally regulated. In early stages (1.7 hpi), P123' is cleaved at the nsP1/nsP2 site with low efficiency. After replication of the viral minus-strand RNAs (4 hpi), the polyproteins are cut at the nsP1/nsP2 and nsP2/nsP3 sites very efficiently, preventing accumulation of P123' and allowing the formation of the late replication complex. Palmitoylated by host palmitoyltransferases ZDHHC2 and ZDHHC19. In terms of processing, phosphorylated by host on serines and threonines. Post-translationally, ubiquitinated; targets the protein for rapid degradation via the ubiquitin system. Nsp4 is present in extremely low quantities due to low frequency of translation through the amber stop-codon and the degradation by the ubiquitin pathway.

The protein localises to the host cytoplasmic vesicle membrane. The protein resides in the host cell membrane. It is found in the host cell projection. It localises to the host filopodium. Its subcellular location is the host nucleus. The protein localises to the host cytoplasm. It carries out the reaction GTP + S-adenosyl-L-methionine = N(7)-methyl-GTP + S-adenosyl-L-homocysteine. It catalyses the reaction N(7)-methyl-GTP + L-histidyl-[protein] = N(tele)-(N(7)-methylguanosine 5'-phospho)-L-histidyl-[protein] + diphosphate. The enzyme catalyses N(tele)-(N(7)-methylguanosine 5'-phospho)-L-histidyl-[protein] + a 5'-end diphospho-(purine-ribonucleoside) in mRNA + H(+) = a 5'-end (N(7)-methyl 5'-triphosphoguanosine)-(purine-ribonucleoside) in mRNA + L-histidyl-[protein]. The catalysed reaction is a 5'-end triphospho-ribonucleoside in mRNA + H2O = a 5'-end diphospho-ribonucleoside in mRNA + phosphate + H(+). It carries out the reaction a ribonucleoside 5'-triphosphate + H2O = a ribonucleoside 5'-diphosphate + phosphate + H(+). It catalyses the reaction ATP + H2O = ADP + phosphate + H(+). The enzyme catalyses RNA(n) + a ribonucleoside 5'-triphosphate = RNA(n+1) + diphosphate. The catalysed reaction is RNA(n) + ATP = RNA(n)-3'-adenine ribonucleotide + diphosphate. It carries out the reaction 4-O-(ADP-D-ribosyl)-L-aspartyl-[protein] + H2O = L-aspartyl-[protein] + ADP-D-ribose + H(+). It catalyses the reaction 5-O-(ADP-D-ribosyl)-L-glutamyl-[protein] + H2O = L-glutamyl-[protein] + ADP-D-ribose + H(+). The enzyme catalyses ADP-alpha-D-ribose 1''-phosphate + H2O = ADP-D-ribose + phosphate. In terms of biological role, inactive precursor of the viral replicase, which is activated by cleavages carried out by the viral protease nsP2. Functionally, the early replication complex formed by the polyprotein P123 and nsP4 synthesizes minus-strand RNAs. As soon P123 is cleaved into mature proteins, the plus-strand RNAs synthesis begins. The early replication complex formed by the polyprotein P123' and nsP4 synthesizes minus-strand RNAs. Polyprotein P123' is a short-lived polyprotein that accumulates during early stage of infection. As soon P123' is cleaved into mature proteins, the plus-strand RNAs synthesis begins. Its function is as follows. Cytoplasmic capping enzyme that catalyzes two virus-specific reactions: methyltransferase and nsP1 guanylyltransferase. mRNA-capping is necessary since all viral RNAs are synthesized in the cytoplasm, and host capping enzymes are restricted to the nucleus. The enzymatic reaction involves a covalent link between 7-methyl-GMP and nsP1, whereas eukaryotic capping enzymes form a covalent complex only with GMP. nsP1 capping consists in the following reactions: GTP is first methylated into 7-methyl-GMP and then is covalently linked to nsP1 to form the m7GMp-nsP1 complex from which 7-methyl-GMP complex is transferred to the mRNA to create the cap structure. NsP1 is needed for the initiation of the minus-strand RNAs synthesis. Probably serves as a membrane anchor for the replication complex composed of nsP1-nsP4. Palmitoylated nsP1 is remodeling host cell cytoskeleton, and induces filopodium-like structure formation at the surface of the host cell. In terms of biological role, multifunctional protein whose N-terminus is part of the RNA polymerase complex and displays NTPase, RNA triphosphatase and helicase activities. NTPase and RNA triphosphatase are involved in viral RNA capping and helicase keeps a check on the dsRNA replication intermediates. The C-terminus harbors a protease that specifically cleaves the polyproteins and releases the mature proteins. Required for the shutoff of minus-strand RNAs synthesis. Specifically inhibits the host IFN response by promoting the nuclear export of host STAT1. Also inhibits host transcription by inducing rapid proteasome-dependent degradation of POLR2A, a catalytic subunit of the RNAPII complex. The resulting inhibition of cellular protein synthesis serves to ensure maximal viral gene expression and to evade host immune response. Functionally, seems to be essential for minus-strand RNAs and subgenomic 26S mRNAs synthesis. Displays mono-ADP-ribosylhydrolase activity. ADP-ribosylation is a post-translational modification that controls various processes of the host cell and the virus probably needs to revert it for optimal viral replication. Binds proteins of FXR family and sequesters them into the viral RNA replication complexes thereby inhibiting the formation of host stress granules on viral mRNAs. The nsp3'-FXR complexes bind viral RNAs and probably orchestrate the assembly of viral replication complexes, thanks to the ability of FXR family members to self-assemble and bind DNA. Seems to be essential for minus-strand RNAs and subgenomic 26S mRNAs synthesis. Displays mono-ADP-ribosylhydrolase activity. ADP-ribosylation is a post-translantional modification that controls various processes of the host cell and the virus probably needs to revert it for optimal viral replication. Binds proteins of G3BP family and sequesters them into the viral RNA replication complexes thereby inhibiting the formation of host stress granules on viral mRNAs. The nsp3-G3BP complexes bind viral RNAs and probably orchestrate the assembly of viral replication complexes, thanks to the ability of G3BP family members to self-assemble and bind DNA. Its function is as follows. RNA dependent RNA polymerase. Replicates genomic and antigenomic RNA by recognizing replications specific signals. The early replication complex formed by the polyprotein P123 and nsP4 synthesizes minus-strand RNAs. The late replication complex composed of fully processed nsP1-nsP4 is responsible for the production of genomic and subgenomic plus-strand RNAs. The core catalytic domain of nsP4 also possesses terminal adenylyltransferase (TATase) activity that is probably involved in maintenance and repair of the poly(A) tail, an element required for replication of the viral genome. This Aura virus (AURAV) protein is Polyprotein P1234.